The following is a 1100-amino-acid chain: cGMP-inhibited 3',5'-cyclic phosphodiesterase 3B (1100 aa).

A compositionally biased stretch (basic and acidic residues) spans 1-11 (MRKDERERDAP). The tract at residues 1-28 (MRKDERERDAPAMRSPPPPPASAASPPE) is interaction with RAPGEF3. Positions 1 to 29 (MRKDERERDAPAMRSPPPPPASAASPPES) are disordered. At Ser-15 the chain carries Phosphoserine. Helical transmembrane passes span 69-89 (AGAR…LLGA), 110-130 (LSLS…CFLT), 140-160 (AGSW…FAAW), 170-190 (PAAA…TLAP), 198-218 (VLVL…LGAL), and 225-245 (LLSC…DHFF). Position 273 is a phosphoserine; by PKB/AKT1 or PKB/AKT2 (Ser-273). Phosphoserine is present on residues Ser-274 and Ser-421. Disordered stretches follow at residues 400 to 423 (RKLH…SSGA) and 570 to 590 (EPDG…SVFS). Over residues 408 to 423 (GRTSFPTPQLRRSSGA) the composition is skewed to polar residues. Residues 415-439 (PQLRRSSGASSLLTNEHCSRWDRSS) form an interaction with PIK3R6 region. Basic and acidic residues predominate over residues 573-583 (GTDHPSEKSGE). The 435-residue stretch at 627–1061 (PNIDQEVSLD…KIWKEIIEEE (435 aa)) folds into the PDEase domain. His-713 acts as the Proton donor in catalysis. Residue His-713 coordinates AMP. Positions 717, 797, 798, and 913 each coordinate Mg(2+). AMP is bound by residues Asp-798, Asp-913, and Gln-964. The span at 993-1024 (EEGDDTESDDDDDDDDGDGGEELDSDDEETED) shows a compositional bias: acidic residues. Residues 993 to 1033 (EEGDDTESDDDDDDDDGDGGEELDSDDEETEDNLNPKPQRR) form a disordered region. The stretch at 1044–1079 (MHHLTENHKIWKEIIEEEEEKCKAEGNKLQVDNASL) forms a coiled coil.

It belongs to the cyclic nucleotide phosphodiesterase family. PDE3 subfamily. As to quaternary structure, homodimer. Interacts with PIK3CG; regulates PDE3B activity and thereby cAMP levels in cells. Interacts with RAPGEF3 and PIK3R6; form a signaling complex that regulates phosphatidylinositol 3-kinase gamma in angiogenesis. Interacts with ABHD15; this interaction regulates PDE3B's stability and expression and, thereby, impacts the antilipolytic action of insulin. Requires Mg(2+) as cofactor. Mn(2+) serves as cofactor. Phosphorylation at Ser-273 mediates insulin-induced activation of PDE3B. Abundant in adipose tissues.

It is found in the membrane. The enzyme catalyses a nucleoside 3',5'-cyclic phosphate + H2O = a nucleoside 5'-phosphate + H(+). The catalysed reaction is 3',5'-cyclic AMP + H2O = AMP + H(+). It carries out the reaction 3',5'-cyclic GMP + H2O = GMP + H(+). With respect to regulation, inhibited by cGMP. Functionally, cyclic nucleotide phosphodiesterase with a dual-specificity for the second messengers cAMP and cGMP, which are key regulators of many important physiological processes. Regulates angiogenesis by inhibiting the cAMP-dependent guanine nucleotide exchange factor RAPGEF3 and downstream phosphatidylinositol 3-kinase gamma-mediated signaling. Controls cardiac contractility by reducing cAMP concentration in cardiocytes. This is cGMP-inhibited 3',5'-cyclic phosphodiesterase 3B from Mus musculus (Mouse).